Consider the following 1680-residue polypeptide: Alpha-protein kinase 3 (1680 aa).

The segment at 1–37 is disordered; it reads MGSRRAAGRGWGLGGRAGAGGDSEDDGPVWTPGPASR. Residues 9 to 21 show a composition bias toward gly residues; sequence RGWGLGGRAGAGG. One can recognise an Ig-like 1 domain in the interval 77–173; it reads PLFETTLKSR…SGVLEVGTMT (97 aa). The residue at position 229 (Ser-229) is a Phosphoserine. Disordered regions lie at residues 237-288, 302-759, 785-950, 1078-1128, and 1147-1244; these read STPV…NGED, ELGP…CPRE, SEEA…GTRS, EGSA…LTGL, and PKVR…QRKA. Residues 320 to 337 are compositionally biased toward basic and acidic residues; that stretch reads KDEESKPGEQKLELEKAE. Polar residues predominate over residues 339–353; it reads SQCSSENVVPSTDKP. Residues 402–426 show a composition bias toward pro residues; it reads APAPAPVPAPALAPAPVPVPAPTPV. Over residues 514–532 the composition is skewed to low complexity; sequence ESTTTSLSSQTSESMAQSL. Composition is skewed to polar residues over residues 557–566 and 731–744; these read SPLQGQTSHK and ETQSEQLSMASLSS. The span at 785-796 shows a compositional bias: basic and acidic residues; that stretch reads SEEAAFRSHEDG. Residues 917-932 are compositionally biased toward polar residues; it reads SPTQSHPPEAMATSSE. Composition is skewed to basic and acidic residues over residues 1087–1111 and 1151–1165; these read ERTSQESDKKGLLGEVEGHTVESRT and AGSDGEANKAEERES. Phosphoserine is present on Ser-1199. Residues 1231–1244 show a composition bias toward basic and acidic residues; that stretch reads DEGKQEALAKQRKA. The region spanning 1251 to 1339 is the Ig-like 2 domain; that stretch reads PQVIRKIRVE…GSASTDFCLS (89 aa). Cys-1273 and Cys-1323 form a disulfide bridge. The region spanning 1367-1600 is the Alpha-type protein kinase domain; the sequence is KGLADSGCWG…YCDMLGLKPL (234 aa). A disordered region spans residues 1603–1680; it reads PEAAHPQAKA…DGSSKAQSMR (78 aa). 2 stretches are compositionally biased toward polar residues: residues 1639–1660 and 1671–1680; these read PQGSRKSAPSSRATLQASQAAT and DGSSKAQSMR.

This sequence belongs to the protein kinase superfamily. Alpha-type protein kinase family. ALPK subfamily. Expressed in the heart and skeletal muscle of adult mice.

The protein resides in the nucleus. It catalyses the reaction L-seryl-[protein] + ATP = O-phospho-L-seryl-[protein] + ADP + H(+). It carries out the reaction L-threonyl-[protein] + ATP = O-phospho-L-threonyl-[protein] + ADP + H(+). In terms of biological role, involved in cardiomyocyte differentiation. The chain is Alpha-protein kinase 3 from Mus musculus (Mouse).